A 77-amino-acid polypeptide reads, in one-letter code: Acyl carrier protein (77 aa).

The Carrier domain occupies 2 to 77; the sequence is STVEERVKKI…DAIDYILANQ (76 aa). Serine 37 is subject to O-(pantetheine 4'-phosphoryl)serine.

This sequence belongs to the acyl carrier protein (ACP) family. Post-translationally, 4'-phosphopantetheine is transferred from CoA to a specific serine of apo-ACP by AcpS. This modification is essential for activity because fatty acids are bound in thioester linkage to the sulfhydryl of the prosthetic group.

The protein resides in the cytoplasm. It functions in the pathway lipid metabolism; fatty acid biosynthesis. In terms of biological role, carrier of the growing fatty acid chain in fatty acid biosynthesis. The protein is Acyl carrier protein of Hahella chejuensis (strain KCTC 2396).